Reading from the N-terminus, the 179-residue chain is UPF0316 protein Ping_1367 (179 aa).

A run of 2 helical transmembrane segments spans residues phenylalanine 28–valine 48 and tryptophan 55–isoleucine 75.

It belongs to the UPF0316 family.

It is found in the cell membrane. The polypeptide is UPF0316 protein Ping_1367 (Psychromonas ingrahamii (strain DSM 17664 / CCUG 51855 / 37)).